The chain runs to 161 residues: Large ribosomal subunit protein uL15 (161 aa).

The tract at residues 1 to 39 is disordered; sequence MTKLNELAPREGSTKGRMRVGRGPGSGKGKTAGRGVKGQ. Residues 22–36 are compositionally biased toward gly residues; sequence RGPGSGKGKTAGRGV.

Belongs to the universal ribosomal protein uL15 family. Part of the 50S ribosomal subunit.

Functionally, binds to the 23S rRNA. This Caulobacter vibrioides (strain ATCC 19089 / CIP 103742 / CB 15) (Caulobacter crescentus) protein is Large ribosomal subunit protein uL15.